A 302-amino-acid polypeptide reads, in one-letter code: Small ribosomal subunit biogenesis GTPase RsgA (302 aa).

The CP-type G domain occupies Lys75–Met233. Residues Asn124–Asp127 and Gly175–Ser183 each bind GTP. Zn(2+) contacts are provided by Cys257, Cys262, His264, and Cys270.

It belongs to the TRAFAC class YlqF/YawG GTPase family. RsgA subfamily. In terms of assembly, monomer. Associates with 30S ribosomal subunit, binds 16S rRNA. Zn(2+) serves as cofactor.

It is found in the cytoplasm. Its function is as follows. One of several proteins that assist in the late maturation steps of the functional core of the 30S ribosomal subunit. Helps release RbfA from mature subunits. May play a role in the assembly of ribosomal proteins into the subunit. Circularly permuted GTPase that catalyzes slow GTP hydrolysis, GTPase activity is stimulated by the 30S ribosomal subunit. This is Small ribosomal subunit biogenesis GTPase RsgA from Agathobacter rectalis (strain ATCC 33656 / DSM 3377 / JCM 17463 / KCTC 5835 / VPI 0990) (Eubacterium rectale).